Reading from the N-terminus, the 589-residue chain is Phosphoenolpyruvate carboxykinase [GTP] (589 aa).

Substrate-binding positions include R75 and 207-209 (YGG). Mn(2+) is bound by residues K216 and H236. Substrate is bound at residue S258. Residue 259–264 (ASGKTN) participates in GTP binding. The active site involves S260. D287 is a binding site for Mn(2+). 374–376 (NSR) is a substrate binding site. GTP-binding positions include R376, R407, and 500–503 (FAEN).

This sequence belongs to the phosphoenolpyruvate carboxykinase [GTP] family. The cofactor is Mn(2+).

It localises to the cytoplasm. The enzyme catalyses oxaloacetate + GTP = phosphoenolpyruvate + GDP + CO2. It participates in carbohydrate biosynthesis; gluconeogenesis. Its function is as follows. Catalyzes the conversion of oxaloacetate (OAA) to phosphoenolpyruvate (PEP), the rate-limiting step in the metabolic pathway that produces glucose from lactate and other precursors derived from the citric acid cycle. The sequence is that of Phosphoenolpyruvate carboxykinase [GTP] from Thermoplasma volcanium (strain ATCC 51530 / DSM 4299 / JCM 9571 / NBRC 15438 / GSS1).